The primary structure comprises 83 residues: Delta-conotoxin-like MVIC (83 aa).

The first 22 residues, 1-22 (MKLTCVMIVAVLFLTTWTFVTA), serve as a signal peptide directing secretion. The propeptide occupies 23 to 49 (DDSRYGLKNLFPKARHEMKNPEASKLN). 3 cysteine pairs are disulfide-bonded: cysteine 54-cysteine 69, cysteine 61-cysteine 73, and cysteine 68-cysteine 78. Residues proline 56 and proline 65 each carry the 4-hydroxyproline modification.

Belongs to the conotoxin O1 superfamily. Expressed by the venom duct.

Its subcellular location is the secreted. Functionally, delta-conotoxins bind to site 6 of voltage-gated sodium channels (Nav) and inhibit the inactivation process. This chain is Delta-conotoxin-like MVIC, found in Conus magus (Magical cone).